The chain runs to 859 residues: Leucine--tRNA ligase (859 aa).

Residues 42–52 carry the 'HIGH' region motif; the sequence is PYPSGKLHMGH. The 'KMSKS' region motif lies at 618-622; sequence KMSKS. Residue K621 coordinates ATP.

Belongs to the class-I aminoacyl-tRNA synthetase family.

It localises to the cytoplasm. The catalysed reaction is tRNA(Leu) + L-leucine + ATP = L-leucyl-tRNA(Leu) + AMP + diphosphate. This chain is Leucine--tRNA ligase, found in Buchnera aphidicola subsp. Acyrthosiphon pisum (strain APS) (Acyrthosiphon pisum symbiotic bacterium).